The following is a 271-amino-acid chain: Large ribosomal subunit protein uL3c (271 aa).

Residues 1-49 constitute a chloroplast transit peptide; it reads MAIAMAVVSFPSLLNKTTLSSSLFTPTFLPAKSSSLLIKSSPKTRFVVS. Positions 190–222 are disordered; sequence HGSKSHRALGSIGAGTTPGRVYKGKKMPGRMGG.

The protein belongs to the universal ribosomal protein uL3 family. In terms of assembly, part of the 50S ribosomal subunit.

It localises to the plastid. The protein localises to the chloroplast. Its function is as follows. One of the primary rRNA binding proteins, it binds directly near the 3'-end of the 23S rRNA, where it nucleates assembly of the 50S subunit. This is Large ribosomal subunit protein uL3c (RPL3A) from Arabidopsis thaliana (Mouse-ear cress).